The primary structure comprises 251 residues: PF03932 family protein CutC (251 aa).

This sequence belongs to the CutC family.

Its subcellular location is the cytoplasm. This chain is PF03932 family protein CutC, found in Bacteroides fragilis (strain YCH46).